The following is a 183-amino-acid chain: ATP synthase subunit b, chloroplastic (183 aa).

A helical transmembrane segment spans residues 25–45 (DILATNLINLTVVVGVLIFFG).

It belongs to the ATPase B chain family. In terms of assembly, F-type ATPases have 2 components, F(1) - the catalytic core - and F(0) - the membrane proton channel. F(1) has five subunits: alpha(3), beta(3), gamma(1), delta(1), epsilon(1). F(0) has four main subunits: a(1), b(1), b'(1) and c(10-14). The alpha and beta chains form an alternating ring which encloses part of the gamma chain. F(1) is attached to F(0) by a central stalk formed by the gamma and epsilon chains, while a peripheral stalk is formed by the delta, b and b' chains.

The protein localises to the plastid. It is found in the chloroplast thylakoid membrane. Its function is as follows. F(1)F(0) ATP synthase produces ATP from ADP in the presence of a proton or sodium gradient. F-type ATPases consist of two structural domains, F(1) containing the extramembraneous catalytic core and F(0) containing the membrane proton channel, linked together by a central stalk and a peripheral stalk. During catalysis, ATP synthesis in the catalytic domain of F(1) is coupled via a rotary mechanism of the central stalk subunits to proton translocation. In terms of biological role, component of the F(0) channel, it forms part of the peripheral stalk, linking F(1) to F(0). This chain is ATP synthase subunit b, chloroplastic, found in Zea mays (Maize).